Reading from the N-terminus, the 222-residue chain is Disulfide bond formation protein D (222 aa).

The signal sequence occupies residues 1-36 (MKKKQQSSAKFAVILTVVVVVLLAAIVIINNKTEQG). The Thioredoxin domain occupies 37–220 (NDAVSGQPSI…IKETIEKELK (184 aa)). A disulfide bridge connects residues Cys69 and Cys72.

This sequence belongs to the thioredoxin family. DsbA subfamily.

Its subcellular location is the cell membrane. The protein localises to the membrane raft. Required for the stabilization, possibly via formation of a disulfide bond, of the obligatory competence protein ComGC. May be required for the stability of secreted proteins with disulfide bonds. Not required for sporulation. This chain is Disulfide bond formation protein D (bdbD), found in Bacillus subtilis (strain 168).